The following is a 2187-amino-acid chain: Non-reducing polyketide synthase phnA (2187 aa).

Residues 17 to 255 (LLFGDLSLAH…KYLDIDSPYH (239 aa)) are N-terminal acylcarrier protein transacylase domain (SAT). A Ketosynthase family 3 (KS3) domain is found at 383-819 (HSKIAIVGYS…GGNTAMLIED (437 aa)). Residues cysteine 555, histidine 690, and histidine 735 each act as for beta-ketoacyl synthase activity in the active site. Residues 926–1226 (RVAFAFTGQG…GMVKGTIDSR (301 aa)) form a malonyl-CoA:ACP transacylase (MAT) domain region. The active-site For acyl/malonyl transferase activity is serine 1021. A product template (PT) domain region spans residues 1321-1637 (PCAQQIVEEF…PRRALDHLLP (317 aa)). The N-terminal hotdog fold stretch occupies residues 1324-1458 (QQIVEEFHDS…LDVVLYPGQQ (135 aa)). A PKS/mFAS DH domain is found at 1324-1633 (QQIVEEFHDS…FQGVPRRALD (310 aa)). Histidine 1356 functions as the Proton acceptor; for dehydratase activity in the catalytic mechanism. Residues 1486-1633 (TETHLIKRGM…FQGVPRRALD (148 aa)) are C-terminal hotdog fold. Aspartate 1546 acts as the Proton donor; for dehydratase activity in catalysis. The span at 1652-1669 (KAPVAAVAPPRTPTKAAP) shows a compositional bias: low complexity. The disordered stretch occupies residues 1652–1681 (KAPVAAVAPPRTPTKAAPQSRQAAPKQKRS). Carrier domains are found at residues 1684–1758 (SDVF…SNSD) and 1796–1874 (SSES…YNVM). Serine 1718 bears the O-(pantetheine 4'-phosphoryl)serine mark. A disordered region spans residues 1754–1796 (LSNSDEDDTPSGDSSTYEDSESQITSPASSVGPETPGGGEFGS). Over residues 1757–1774 (SDEDDTPSGDSSTYEDSE) the composition is skewed to acidic residues. Serine 1834 is modified (O-(pantetheine 4'-phosphoryl)serine). A thioesterase (TE) domain region spans residues 1906 to 2183 (SSLPQATSIL…PEMGEAVAEF (278 aa)). Serine 2009 functions as the For thioesterase activity in the catalytic mechanism.

The catalysed reaction is 6 malonyl-CoA + acetyl-CoA + 5 H(+) = 3,6,7,9-tetrahydroxy-3-methyl-2,3-dihydro-1H-naphtho[2,1-b]pyran-1-one + 6 CO2 + 7 CoA + H2O. It participates in secondary metabolite biosynthesis. In terms of biological role, non-reducing polyketide synthase; part of the gene cluster that mediates the biosynthesis of phenalenones such as herqueinone, compounds that have been reported to treat tumors, bacterial infections and/or mycoses, and rheumatic diseases. The non-reducing polyketide synthase phnA synthesizes the heptaketide backbone and cyclizes it into the angular, hemiketal-containing naphtho-gamma-pyrone prephenalenone. The product template (PT) domain of phnA catalyzes only the C4-C9 aldol condensation, which is unprecedented among known PT domains. The transformation of prephenalenone to phenalenones requires an FAD-dependent monooxygenase phnB, which catalyzes the C2 aromatic hydroxylation of prephenalenone and ring opening of the gamma-pyrone ring simultaneously. Subsequent intramolecular deprotonation of C3 phenolic oxygen accelerates phenalenone ring closure to yield the tricyclic phenalenone core with a C2 hydroxylation. The prenyltransferase phnF further catalyzes reverse C-prenylation of phenalenone by direct electrophilic substitution at C6, or possibly via first a forward O-prenylation of a neighboring phenol in phenalenone, followed by a Claisen rearrangement. The hydroalkoxylation enzyme phnH catalyzes the 5-exo-trig cyclization via acid catalysis after the spontaneous deprotonation of 7-OH, which leads to the formation of the dihydrobenzofuran atrovenetin. Atrovenetin is further converted to deoxyherqueinone by the O-methyltransferase phnC which can methylate C2-OH to stabilize the northern portion of the phenalenone core. Finally, the oxidoreductase phnG converts deoxyherqueinone to herqueinone via C6 hydroxylation. The sequence is that of Non-reducing polyketide synthase phnA from Penicillium herquei.